The chain runs to 366 residues: Fructose-bisphosphate aldolase 1 (366 aa).

The substrate site is built by Arg56 and Lys147. Glu189 acts as the Proton acceptor in catalysis. Lys231 functions as the Schiff-base intermediate with dihydroxyacetone-P in the catalytic mechanism.

The protein belongs to the class I fructose-bisphosphate aldolase family. In terms of tissue distribution, ubiquitous.

It catalyses the reaction beta-D-fructose 1,6-bisphosphate = D-glyceraldehyde 3-phosphate + dihydroxyacetone phosphate. It functions in the pathway carbohydrate degradation; glycolysis; D-glyceraldehyde 3-phosphate and glycerone phosphate from D-glucose: step 4/4. May be involved in the metabolism of fructose-bisphosphate (beta-D-fructose 1,6-bisphosphate) and of fructose 1-phosphate. In Caenorhabditis elegans, this protein is Fructose-bisphosphate aldolase 1 (aldo-1).